Reading from the N-terminus, the 286-residue chain is Bifunctional protein FolD (286 aa).

Residues 165–167 (GRS), Ser-190, and Val-231 each bind NADP(+).

Belongs to the tetrahydrofolate dehydrogenase/cyclohydrolase family. As to quaternary structure, homodimer.

It catalyses the reaction (6R)-5,10-methylene-5,6,7,8-tetrahydrofolate + NADP(+) = (6R)-5,10-methenyltetrahydrofolate + NADPH. The enzyme catalyses (6R)-5,10-methenyltetrahydrofolate + H2O = (6R)-10-formyltetrahydrofolate + H(+). It participates in one-carbon metabolism; tetrahydrofolate interconversion. Its function is as follows. Catalyzes the oxidation of 5,10-methylenetetrahydrofolate to 5,10-methenyltetrahydrofolate and then the hydrolysis of 5,10-methenyltetrahydrofolate to 10-formyltetrahydrofolate. The polypeptide is Bifunctional protein FolD (Bacillus cereus (strain ATCC 10987 / NRS 248)).